Consider the following 362-residue polypeptide: MATLSFRNVKKTYAGNVPVIHGIDMDVADGEFIVIVGPSGCGKSTLMRMVAGLETVTEGEILIDDKVVNTLEPAERDIAMVFQNYALYPHMSVFDNMAYGLKIRRLPKDEIRKRVEAAAQILELGKLLDRRPRALSGGQRQRVAMGRAIVREPKVFLFDEPLSNLDAKLRVAMRLEILKLHRRLNTTSLYVTHDQVEAMTLAHRMVVMYQGVPEQIGTPMEVFEKPASTFVAGFIGSPPMNLLEVAVGGDGIVHTSDGIALDISPLAVPQQVRGRKVVMGLRPEHMLLNAQGLAAEIEMVETLGSEQLVHGRCGKHMVVVRCSTRQFSETPARVGDTLTIGPDGRHPLHWFEADTGRRVEGL.

The ABC transporter domain maps to 4-235; the sequence is LSFRNVKKTY…PASTFVAGFI (232 aa). ATP is bound at residue 37 to 44; the sequence is GPSGCGKS.

The protein belongs to the ABC transporter superfamily. sn-glycerol-3-phosphate importer (TC 3.A.1.1.3) family. The complex is composed of two ATP-binding proteins (UgpC), two transmembrane proteins (UgpA and UgpE) and a solute-binding protein (UgpB).

The protein localises to the cell inner membrane. The enzyme catalyses sn-glycerol 3-phosphate(out) + ATP + H2O = sn-glycerol 3-phosphate(in) + ADP + phosphate + H(+). Functionally, part of the ABC transporter complex UgpBAEC involved in sn-glycerol-3-phosphate (G3P) import. Responsible for energy coupling to the transport system. This is sn-glycerol-3-phosphate import ATP-binding protein UgpC from Bordetella pertussis (strain Tohama I / ATCC BAA-589 / NCTC 13251).